The following is an 802-amino-acid chain: Endoplasmin (802 aa).

The signal sequence occupies residues 1–21; that stretch reads MRALWVLGLCCVLLTFGSARA. The SRT pseudosubstrate motif motif lies at 42–44; that stretch reads SRT. N-linked (GlcNAc...) asparagine glycosylation occurs at Asn62. Phosphoserine is present on Ser64. Residue Asn107 is glycosylated (N-linked (GlcNAc...) asparagine). ATP contacts are provided by Asn107, Asp149, and Asn162. Lys168 is subject to N6-(2-hydroxyisobutyryl)lysine. Ser172 bears the Phosphoserine mark. Phe199 is a binding site for ATP. Residue Asn217 is glycosylated (N-linked (GlcNAc...) asparagine). Residues 288-323 form a disordered region; that stretch reads TVEEPAEEEEAAKEEKEEADDEAAVEEEEEEKKPKT. Residues 289 to 317 are compositionally biased toward acidic residues; the sequence is VEEPAEEEEAAKEEKEEADDEAAVEEEEE. Ser403 carries the phosphoserine modification. Lys404 bears the N6-succinyllysine mark. The N-linked (GlcNAc...) asparagine glycan is linked to Asn445. Residue Ser447 is modified to Phosphoserine. Lys479 is modified (N6-acetyllysine). Asn481 and Asn502 each carry an N-linked (GlcNAc...) asparagine glycan. Lys633 carries the post-translational modification N6-succinyllysine. A disordered region spans residues 750-802; it reads DPDAKVEEEPEEEPEDTTEDTEQDEEEEMDAGTDEEEQEQEPEKKSTAEKDEL. Over residues 757-789 the composition is skewed to acidic residues; it reads EEPEEEPEDTTEDTEQDEEEEMDAGTDEEEQEQ. At Thr782 the chain carries Phosphothreonine. The span at 790–802 shows a compositional bias: basic and acidic residues; the sequence is EPEKKSTAEKDEL. Residues 799 to 802 carry the Prevents secretion from ER motif; the sequence is KDEL.

This sequence belongs to the heat shock protein 90 family. Homodimer; disulfide-linked. Component of an EIF2 complex at least composed of CELF1/CUGBP1, CALR, CALR3, EIF2S1, EIF2S2, HSP90B1 and HSPA5. Part of a large chaperone multiprotein complex comprising DNAJB11, HSP90B1, HSPA5, HYOU, PDIA2, PDIA4, PDIA6, PPIB, SDF2L1, UGGT1 and very small amounts of ERP29, but not, or at very low levels, CALR nor CANX. Interacts with AIMP1; regulates its retention in the endoplasmic reticulum. Hyperglycosylated form interacts with OS9; promoting its degradation by the endoplasmic reticulum associated degradation (ERAD). Interacts with CNPY3. This interaction is disrupted in the presence of ATP. Interacts with TLR4 and TLR9, but not with TLR3. Interacts with MZB1 in a calcium-dependent manner. Interacts with METTL23. Interacts with IL1B; the interaction facilitates cargo translocation into the ERGIC. Interacts with EIF2AK3. Phosphorylated by CK2. In terms of processing, N-glycosylated cotranslationally at Asn-217 by STT3A-containing OST-A complex: this glycosylation is constitutive. In response to various stress, 5 additional facultative sites (Asn-62, Asn-107, Asn-445, Asn-481 and Asn-502) can be glycosylated post-translationally by STT3B-containing OST-B complex, leading to a hyperglycosylated form that is degraded by the ER-associated degradation (ERAD) pathway. In normal conditions, the OST-A complex together with CCDC134 prevent glycosylation at facultative sites during protein folding, thereby preventing hyperglycosylation. Mechanistically, nascent HSP90B1 is tethered during translation to a specialized CCDC134-containing translocon that forms a microenvironment for its folding, in which STT3A associates with the SRT pseudosubstrate motif, and prevents access to facultative glycosylation sites until folding is completed, rendering its facultative sites inaccessible to the OST-B complex.

It localises to the endoplasmic reticulum lumen. It is found in the sarcoplasmic reticulum lumen. The protein resides in the melanosome. It carries out the reaction ATP + H2O = ADP + phosphate + H(+). Its function is as follows. ATP-dependent chaperone involved in the processing of proteins in the endoplasmic reticulum, regulating their transport. Together with MESD, acts as a modulator of the Wnt pathway by promoting the folding of LRP6, a coreceptor of the canonical Wnt pathway. When associated with CNPY3, required for proper folding of Toll-like receptors. Promotes folding and trafficking of TLR4 to the cell surface. May participate in the unfolding of cytosolic leaderless cargos (lacking the secretion signal sequence) such as the interleukin 1/IL-1 to facilitate their translocation into the ERGIC (endoplasmic reticulum-Golgi intermediate compartment) and secretion; the translocation process is mediated by the cargo receptor TMED10. The polypeptide is Endoplasmin (HSP90B1) (Oryctolagus cuniculus (Rabbit)).